Reading from the N-terminus, the 226-residue chain is ATP-dependent Clp protease proteolytic subunit 4 (226 aa).

S122 functions as the Nucleophile in the catalytic mechanism. The active site involves H147.

This sequence belongs to the peptidase S14 family. In terms of assembly, fourteen ClpP subunits assemble into 2 heptameric rings which stack back to back to give a disk-like structure with a central cavity, resembling the structure of eukaryotic proteasomes.

Its subcellular location is the cytoplasm. It carries out the reaction Hydrolysis of proteins to small peptides in the presence of ATP and magnesium. alpha-casein is the usual test substrate. In the absence of ATP, only oligopeptides shorter than five residues are hydrolyzed (such as succinyl-Leu-Tyr-|-NHMec, and Leu-Tyr-Leu-|-Tyr-Trp, in which cleavage of the -Tyr-|-Leu- and -Tyr-|-Trp bonds also occurs).. In terms of biological role, cleaves peptides in various proteins in a process that requires ATP hydrolysis. Has a chymotrypsin-like activity. Plays a major role in the degradation of misfolded proteins. This is ATP-dependent Clp protease proteolytic subunit 4 from Streptomyces avermitilis (strain ATCC 31267 / DSM 46492 / JCM 5070 / NBRC 14893 / NCIMB 12804 / NRRL 8165 / MA-4680).